A 490-amino-acid chain; its full sequence is Protein U94 (490 aa).

In terms of domain architecture, PV NS1-Nuc spans 1–210 (MFSIINPSDD…SHFNKKPNVK (210 aa)).

The protein localises to the host nucleus. The polypeptide is Protein U94 (U94) (Human herpesvirus 6A (strain Uganda-1102) (HHV-6 variant A)).